Here is a 276-residue protein sequence, read N- to C-terminus: Plant cysteine oxidase 2 (276 aa).

The segment at Met1 to Lys40 is disordered. A compositionally biased stretch (polar residues) spans Lys17–Arg28. The segment covering Asn30–Lys40 has biased composition (basic residues). Positions 134, 136, and 197 each coordinate Fe cation.

This sequence belongs to the cysteine dioxygenase family. Requires Fe(2+) as cofactor.

The protein localises to the nucleus. Its subcellular location is the cytoplasm. The enzyme catalyses L-cysteine + O2 = 3-sulfino-L-alanine + H(+). In terms of biological role, catalyzes the oxidation of N-terminal cysteine residues (N-Cys), thus preparing the protein for N-end rule pathway-mediated proteasomal degradation, upstream of the N-end rule enzymes ATE1, ATE2 and PRT6. Controls the preparation of the group VII ethylene response factor (ERF-VII) proteins for degradation via the 26S proteasome N-end rule pathway. Acts as an oxygen sensor that controls the stability of ERF-VII proteins, which are stabilized in flooding-induced hypoxia, and regulate transcriptional adaptation to these adverse conditions. Not active on Cys located inside or at the C-terminus of a peptide. Acts redundantly with PCO1 to repress the anaerobic response. This is Plant cysteine oxidase 2 from Arabidopsis thaliana (Mouse-ear cress).